Reading from the N-terminus, the 203-residue chain is CASP-like protein 2U6 (203 aa).

Residues 1–31 (MSEHRIPVAADKKISPPISAGEQKGCKGLKR) are Cytoplasmic-facing. The helical transmembrane segment at 32–52 (TDLMLRFAAFVCCTVTMVVLI) threads the bilayer. The Extracellular segment spans residues 53-84 (TDKQTSAIQVPGFNNLTITKTVSFDLAKAFVY). N67 carries N-linked (GlcNAc...) asparagine glycosylation. A helical transmembrane segment spans residues 85–105 (LVSAAGIGAGYTLLVLVLSII). Residues 106-111 (SAERSK) lie on the Cytoplasmic side of the membrane. The helical transmembrane segment at 112 to 132 (AIAWFIFVFDQLITYVLLAAA) threads the bilayer. The Extracellular portion of the chain corresponds to 133–164 (AASTEVAYMGAHAPPEASWLKVCSLFGRFCHQ). The helical transmembrane segment at 165–185 (LGASLVTSLISTVLFAFSAAI) threads the bilayer. The Cytoplasmic segment spans residues 186–203 (SAYYLFSNTNVRPAYSKG).

Belongs to the Casparian strip membrane proteins (CASP) family. Homodimer and heterodimers.

The protein resides in the cell membrane. In Selaginella moellendorffii (Spikemoss), this protein is CASP-like protein 2U6.